A 132-amino-acid chain; its full sequence is MAAGMKGKRSRRRKERKNVEHGCAHIKSTFNNSIVTITDSVGNTLSWASAGGLGFRGSRKSTPFAAQMAAETAAKVAMEHGLKSIEVYVKGPGSGREAAIRSLQAAGLEVTLIKDVTPIPHNGCRPPKRRRV.

Basic residues predominate over residues 1–16 (MAAGMKGKRSRRRKER). The interval 1–20 (MAAGMKGKRSRRRKERKNVE) is disordered.

Belongs to the universal ribosomal protein uS11 family. As to quaternary structure, part of the 30S ribosomal subunit. Interacts with proteins S7 and S18. Binds to IF-3.

Located on the platform of the 30S subunit, it bridges several disparate RNA helices of the 16S rRNA. Forms part of the Shine-Dalgarno cleft in the 70S ribosome. This chain is Small ribosomal subunit protein uS11, found in Clostridium botulinum (strain Kyoto / Type A2).